A 389-amino-acid polypeptide reads, in one-letter code: Chalcone synthase 4 (389 aa).

The active site involves Cys-164.

It belongs to the thiolase-like superfamily. Chalcone/stilbene synthases family.

It catalyses the reaction (E)-4-coumaroyl-CoA + 3 malonyl-CoA + 3 H(+) = 2',4,4',6'-tetrahydroxychalcone + 3 CO2 + 4 CoA. Its pathway is secondary metabolite biosynthesis; flavonoid biosynthesis. Functionally, the primary product of this enzyme is 4,2',4',6'-tetrahydroxychalcone (also termed naringenin-chalcone or chalcone) which can under specific conditions spontaneously isomerize into naringenin. The sequence is that of Chalcone synthase 4 (CHS4) from Pisum sativum (Garden pea).